Here is a 524-residue protein sequence, read N- to C-terminus: Putative UDP-glucuronosyltransferase ugt-56 (524 aa).

A signal peptide spans 1-20 (MLWAFIVWLGALCIYGSAFD). Residues Asn-125, Asn-277, and Asn-335 are each glycosylated (N-linked (GlcNAc...) asparagine). Residues 488 to 508 (LIDSSIALVFMLFIFVFVNHF) form a helical membrane-spanning segment.

This sequence belongs to the UDP-glycosyltransferase family.

It localises to the membrane. It carries out the reaction glucuronate acceptor + UDP-alpha-D-glucuronate = acceptor beta-D-glucuronoside + UDP + H(+). This is Putative UDP-glucuronosyltransferase ugt-56 (ugt-56) from Caenorhabditis elegans.